The sequence spans 345 residues: MKNNNNTTKSTTMSSSVLSTNETFPTTINSATKIFRYQHIMPAPSPLIPGGNQNQPAGTMPIKTRKYTPRGMALTRCSESVSSLSPGSSPAPYNVDQSQSVQRRNARERNRVKQVNNSFARLRQHIPQSIITDLTKGGGRGPHKKISKVDTLRIAVEYIRRLQDLVDDLNGGSNIGANNAVTQLQLCLDESSSHSSSSSTCSSSGHNTYYQNTISVSPLQQQQQLQRQQFNHQPLTALSLNTNLVGTSVPGGDAGCVSTSKNQQTCHSPTSSFNSSMSFDSGTYEGVPQQISTHLDRLDHLDNELHTHSQLQLKFEPYEHFQLDEEDCTPDDEEILDYISLWQEQ.

Residues 78–92 (SESVSSLSPGSSPAP) show a composition bias toward low complexity. Positions 78–109 (SESVSSLSPGSSPAPYNVDQSQSVQRRNARER) are disordered. A bHLH domain is found at 99 to 162 (QSVQRRNARE…RIAVEYIRRL (64 aa)).

Efficient DNA binding requires dimerization with another bHLH protein. Interacts with da (via bHLH motif). Interacts with Bap60. As to expression, l(1)SC, SC and AC strongly label the presumptive stomatogastric nervous system, while ASE is more prominent in the presumptive procephalic lobe. Associates with the somatic nuclei through nuclear cycles 9 and 10. During nuclear cycle 11 distributes uniformly in the embryo.

In terms of biological role, AS-C proteins are involved in the determination of the neuronal precursors in the peripheral nervous system and the central nervous system. Also involved in sex determination and dosage compensation. This chain is Achaete-scute complex protein T4 (sc), found in Drosophila melanogaster (Fruit fly).